Reading from the N-terminus, the 292-residue chain is 33 kDa chaperonin (292 aa).

Cystine bridges form between Cys230/Cys232 and Cys263/Cys266.

The protein belongs to the HSP33 family. Under oxidizing conditions two disulfide bonds are formed involving the reactive cysteines. Under reducing conditions zinc is bound to the reactive cysteines and the protein is inactive.

The protein resides in the cytoplasm. In terms of biological role, redox regulated molecular chaperone. Protects both thermally unfolding and oxidatively damaged proteins from irreversible aggregation. Plays an important role in the bacterial defense system toward oxidative stress. The sequence is that of 33 kDa chaperonin from Escherichia coli O17:K52:H18 (strain UMN026 / ExPEC).